Consider the following 213-residue polypeptide: Orotate phosphoribosyltransferase (213 aa).

Position 26 (Lys-26) interacts with 5-phospho-alpha-D-ribose 1-diphosphate. Orotate is bound at residue 34 to 35; it reads FF. 5-phospho-alpha-D-ribose 1-diphosphate is bound by residues 72–73, Arg-99, Lys-100, Lys-103, His-105, and 124–132; these read YK and DDVITAGTA. Thr-128 and Arg-156 together coordinate orotate.

The protein belongs to the purine/pyrimidine phosphoribosyltransferase family. PyrE subfamily. In terms of assembly, homodimer. Mg(2+) serves as cofactor.

The catalysed reaction is orotidine 5'-phosphate + diphosphate = orotate + 5-phospho-alpha-D-ribose 1-diphosphate. It functions in the pathway pyrimidine metabolism; UMP biosynthesis via de novo pathway; UMP from orotate: step 1/2. In terms of biological role, catalyzes the transfer of a ribosyl phosphate group from 5-phosphoribose 1-diphosphate to orotate, leading to the formation of orotidine monophosphate (OMP). This Erwinia tasmaniensis (strain DSM 17950 / CFBP 7177 / CIP 109463 / NCPPB 4357 / Et1/99) protein is Orotate phosphoribosyltransferase.